Reading from the N-terminus, the 1464-residue chain is Collagen alpha-1(III) chain (1464 aa).

The first 23 residues, 1 to 23 (MMSFVQSGTWFLLTLLHPTLILA), serve as a signal peptide directing secretion. The propeptide at 24–154 (QQSNVDELGC…CPTGGQNYSP (131 aa)) is N-terminal propeptide. In terms of domain architecture, VWFC spans 31 to 90 (LGCSHLGQSYESRDVWKPEPCQICVCDSGSVLCDDIICDEEPLDCPNPEIPFGECCAICP). The segment at 97 to 1195 (PVLPDGHGPQ…PGPPGAPGPC (1099 aa)) is disordered. The span at 100–109 (PDGHGPQGPK) shows a compositional bias: low complexity. Residues 147–156 (TGGQNYSPQF) show a composition bias toward polar residues. The tract at residues 155–169 (QFDSYDVKSGVGGMG) is nonhelical region (N-terminal). Positions 164-173 (GVGGMGGYPG) are enriched in gly residues. The tract at residues 170–1195 (GYPGPAGPPG…PGPPGAPGPC (1026 aa)) is triple-helical region. Residues 174-184 (PAGPPGPPGPP) show a composition bias toward pro residues. Residues 186–198 (SSGHPGSPGSPGY) show a composition bias toward low complexity. Over residues 228-240 (KDGESGRPGRPGE) the composition is skewed to basic and acidic residues. Lys-262 carries the post-translational modification 5-hydroxylysine; alternate. Residue Lys-262 is glycosylated (O-linked (Gal...) hydroxylysine; alternate). Over residues 265–276 (RGFDGRNGEKGE) the composition is skewed to basic and acidic residues. 5-hydroxylysine is present on Lys-283. Low complexity-rich tracts occupy residues 310 to 321 (PGLPGAAGARGN) and 354 to 379 (PAGSPGSNGSPGQRGEPGPQGHAGAQ). The segment covering 389-398 (GSPGGKGEMG) has biased composition (gly residues). Residues 399–412 (PAGIPGAPGLIGAR) show a composition bias toward low complexity. A compositionally biased stretch (gly residues) spans 527–548 (GTPGGPGIRGMPGSPGGPGNDG). The span at 606–615 (PAGKNGETGP) shows a compositional bias: low complexity. Composition is skewed to gly residues over residues 641 to 650 (GIPGTGGPPG) and 668 to 677 (GAPGGKGDSG). The span at 678–691 (APGERGPPGTAGIP) shows a compositional bias: low complexity. A compositionally biased stretch (gly residues) spans 692–708 (GARGGAGPPGPEGGKGP). Residues 717 to 727 (ASGSPGLQGMP) show a composition bias toward low complexity. Basic and acidic residues predominate over residues 822–834 (AKGERGAPGEKGE). Lys-859 is subject to 5-hydroxylysine. Over residues 863 to 879 (GSPGGPGTAGFPGGRGL) the composition is skewed to gly residues. A compositionally biased stretch (pro residues) spans 889–906 (PGPPGPSGAPGKDGPPGP). 2 stretches are compositionally biased toward low complexity: residues 907–934 (AGNSGSPGNPGIAGPKGDAGQPGEKGPP) and 945–960 (PLGIAGLTGARGLAGP). Residue Lys-976 is modified to 5-hydroxylysine. Residues 1045–1054 (PGHPGPPGPV) are compositionally biased toward pro residues. Residues 1068-1084 (PAGPSGAPGPAGARGAP) are compositionally biased toward low complexity. 5-hydroxylysine is present on residues Lys-1093 and Lys-1105. Low complexity predominate over residues 1120 to 1132 (PGAAGHQGAIGSP). The span at 1180-1192 (PGQPGPPGPPGAP) shows a compositional bias: pro residues. The propeptide at 1220–1464 (DDPMDFKINT…GVDIGPVCFL (245 aa)) is C-terminal propeptide. Residues 1230–1464 (EEIMSSLKSV…GVDIGPVCFL (235 aa)) form the Fibrillar collagen NC1 domain. 3 cysteine pairs are disulfide-bonded: Cys-1260–Cys-1292, Cys-1300–Cys-1462, and Cys-1370–Cys-1415. Ca(2+) is bound by residues Asp-1278, Asn-1280, Gln-1281, Cys-1283, and Asp-1286.

Belongs to the fibrillar collagen family. Trimers of identical alpha 1(III) chains. The chains are linked to each other by interchain disulfide bonds. Trimers are also cross-linked via hydroxylysines. Interacts with ADGRG1. Proline residues at the third position of the tripeptide repeating unit (G-X-Y) are hydroxylated in some or all of the chains. Post-translationally, O-linked glycan consists of a Glc-Gal disaccharide bound to the oxygen atom of a post-translationally added hydroxyl group. In terms of tissue distribution, expressed in embryonic brain, specifically in the meninges, pial basement membrane and blood vessels (at protein level).

It localises to the secreted. Its subcellular location is the extracellular space. The protein resides in the extracellular matrix. Its function is as follows. Collagen type III occurs in most soft connective tissues along with type I collagen. Involved in regulation of cortical development. Is the major ligand of ADGRG1 in the developing brain and binding to ADGRG1 inhibits neuronal migration and activates the RhoA pathway by coupling ADGRG1 to GNA13 and possibly GNA12. This Mus musculus (Mouse) protein is Collagen alpha-1(III) chain (Col3a1).